Here is a 201-residue protein sequence, read N- to C-terminus: Inosine triphosphate pyrophosphatase (201 aa).

16 to 21 is a binding site for ITP; the sequence is TGNAKK. Glu-44 is a Mg(2+) binding site. Residues Lys-56, 72–73, Lys-89, 148–151, Lys-171, and 176–177 contribute to the ITP site; these read DT, FGWD, and HR.

This sequence belongs to the HAM1 NTPase family. In terms of assembly, homodimer. Requires Mg(2+) as cofactor. It depends on Mn(2+) as a cofactor.

The protein resides in the cytoplasm. The enzyme catalyses ITP + H2O = IMP + diphosphate + H(+). It catalyses the reaction dITP + H2O = dIMP + diphosphate + H(+). The catalysed reaction is XTP + H2O = XMP + diphosphate + H(+). Pyrophosphatase that hydrolyzes non-canonical purine nucleotides such as inosine triphosphate (ITP), deoxyinosine triphosphate (dITP) or xanthosine 5'-triphosphate (XTP) to their respective monophosphate derivatives. The enzyme does not distinguish between the deoxy- and ribose forms. Probably excludes non-canonical purines from RNA and DNA precursor pools, thus preventing their incorporation into RNA and DNA and avoiding chromosomal lesions. The protein is Inosine triphosphate pyrophosphatase of Sorghum bicolor (Sorghum).